The chain runs to 472 residues: Clampless protein 1 (472 aa).

Asparagine 70 and asparagine 296 each carry an N-linked (GlcNAc...) asparagine glycan.

Functionally, required for developmental progression after cells of opposite mating types fuse with one another, essential for processes common to both dikaryotic filament formation and monokaryotic fruiting. A direct target for transcription factors Sxi1-alpha and Sxi2-a. The polypeptide is Clampless protein 1 (Cryptococcus neoformans var. neoformans serotype D (strain B-3501A) (Filobasidiella neoformans)).